Here is a 449-residue protein sequence, read N- to C-terminus: Secretin receptor (449 aa).

A signal peptide spans 1–25 (MLSTMRPRLSLLLLRLLLLTKAAHT). Residues 26–141 (VGVPPRLCDV…NERRHAYLLK (116 aa)) are Extracellular-facing. 3 cysteine pairs are disulfide-bonded: C46-C75, C66-C107, and C89-C123. N-linked (GlcNAc...) asparagine glycosylation is found at N72, N100, N106, and N128. A helical transmembrane segment spans residues 142–167 (LKVMYTVGYSSSLAMLLVALSILCSF). Residues 168–174 (RRLHCTR) are Cytoplasmic-facing. A helical transmembrane segment spans residues 175–195 (NYIHMHLFVSFILRALSNFIK). Residues 196 to 216 (DAVLFSSDDVTYCDAHKVGCK) lie on the Extracellular side of the membrane. C215 and C285 are oxidised to a cystine. The helical transmembrane segment at 217–239 (LVMIFFQYCIMANYAWLLVEGLY) threads the bilayer. Residues 240-254 (LHTLLAISFFSERKY) are Cytoplasmic-facing. Residues 255-276 (LQAFVLLGWGSPAIFVALWAIT) form a helical membrane-spanning segment. Over 277–291 (RHFLENTGCWDINAN) the chain is Extracellular. N-linked (GlcNAc...) asparagine glycosylation occurs at N291. A helical membrane pass occupies residues 292 to 315 (ASVWWVIRGPVILSILINFIFFIN). Topologically, residues 316–340 (ILRILMRKLRTQETRGSETNHYKRL) are cytoplasmic. Residues 341-356 (AKSTLLLIPLFGIHYI) form a helical membrane-spanning segment. At 357–367 (VFAFSPEDAME) the chain is on the extracellular side. Residues 368 to 391 (VQLFFELALGSFQGLVVAVLYCFL) traverse the membrane as a helical segment. The Cytoplasmic portion of the chain corresponds to 392-449 (NGEVQLEVQKKWRQWHLQEFPLRPVAFNNSFSNATNGPTHSTKASTEQSRSIPRASII). Residues 425 to 442 (ATNGPTHSTKASTEQSRS) are compositionally biased toward polar residues. The segment at 425-449 (ATNGPTHSTKASTEQSRSIPRASII) is disordered.

This sequence belongs to the G-protein coupled receptor 2 family. Phosphorylated on Ser and Thr residues at the cytoplasmic C-terminus by G protein-coupled receptor kinases (GRKs). In terms of processing, N-glycosylated. As to expression, in the brain, expressed in the central amygdala, hippocampus, area postrema, nucleus of the tractus solitary and cerebellum.

Its subcellular location is the cell membrane. The protein localises to the basolateral cell membrane. Functionally, g protein-coupled receptor activated by secretin (SCT), which is involved in different processes such as regulation of the pH of the duodenal content, food intake and water homeostasis. Ligand binding causes a conformation change that triggers signaling via guanine nucleotide-binding proteins (G proteins) and activates cAMP-dependent pathway. Upon binding to secretin, regulates the pH of the duodenum by (1) inhibiting the secretion of gastric acid from the parietal cells of the stomach and (2) stimulating the production of bicarbonate (NaHCO(3)) from the ductal cells of the pancreas. In addition to regulating the pH of the duodenal content, plays a central role in diet induced thermogenesis: acts as a non-sympathetic brown fat (BAT) activator mediating prandial thermogenesis, which consequentially induces satiation. Mechanistically, secretin released by the gut after a meal binds to secretin receptor (SCTR) in brown adipocytes, activating brown fat thermogenesis by stimulating lipolysis, which is sensed in the brain and promotes satiation. Also able to stimulate lipolysis in white adipocytes. Also plays an important role in cellular osmoregulation by regulating renal water reabsorption. Also plays a role in the central nervous system: required for synaptic plasticity. In Rattus norvegicus (Rat), this protein is Secretin receptor.